Reading from the N-terminus, the 96-residue chain is Co-chaperonin GroES (96 aa).

This sequence belongs to the GroES chaperonin family. In terms of assembly, heptamer of 7 subunits arranged in a ring. Interacts with the chaperonin GroEL.

Its subcellular location is the cytoplasm. Functionally, together with the chaperonin GroEL, plays an essential role in assisting protein folding. The GroEL-GroES system forms a nano-cage that allows encapsulation of the non-native substrate proteins and provides a physical environment optimized to promote and accelerate protein folding. GroES binds to the apical surface of the GroEL ring, thereby capping the opening of the GroEL channel. This chain is Co-chaperonin GroES, found in Hahella chejuensis (strain KCTC 2396).